The following is a 1217-amino-acid chain: Myosin-1 (1217 aa).

Positions Met1–Gly26 are disordered. Over residues Ala10–Asn19 the composition is skewed to low complexity. ATP-binding positions include Ala17–Ser24 and Gly133–Thr140. Positions Val40 to Asp720 constitute a Myosin motor domain. The residue at position 361 (Ser361) is a Phosphoserine. Tyr363 is modified (phosphotyrosine). An actin-binding region spans residues Ser409–Ala491. IQ domains lie at Asp724 to Ala744 and Ala745 to Lys770. Ser742 carries the post-translational modification Phosphoserine. One can recognise a TH1 domain in the interval Arg778–Pro964. Ser782 is modified (phosphoserine). Residues Gly961–Val1105 are disordered. Residues Lys998–Ala1013 are compositionally biased toward low complexity. The span at Pro1015–Arg1025 shows a compositional bias: polar residues. Low complexity predominate over residues Thr1045–Ser1075. The span at Asn1076–Val1088 shows a compositional bias: polar residues. A compositionally biased stretch (pro residues) spans Ala1093–Ala1103. One can recognise an SH3 domain in the interval Glu1106–Gly1165. At Ser1211 the chain carries Phosphoserine.

It belongs to the TRAFAC class myosin-kinesin ATPase superfamily. Myosin family. In terms of assembly, interacts with cam2. Interacts (via SH3 domain) with vrp1. Post-translationally, phosphorylation of the TEDS site (Ser-361) is required for the polarization of the actin cytoskeleton. Phosphorylation probably activates the myosin-I ATPase activity.

It is found in the cytoplasm. Its subcellular location is the cytoskeleton. The protein resides in the actin patch. Its function is as follows. Type-I myosin implicated in the organization of the actin cytoskeleton. Required for proper actin cytoskeleton polarization. At the cell cortex, assembles in patch-like structures together with proteins from the actin-polymerizing machinery and promotes actin assembly. Functions as actin nucleation-promoting factor (NPF) for the Arp2/3 complex. Contributes to proper septation by transporting vesicles containing septal material to the division site and is involved in the formation of sterol-rich membrane domains at the cell division site. Required also for mating. The polypeptide is Myosin-1 (myo1) (Schizosaccharomyces pombe (strain 972 / ATCC 24843) (Fission yeast)).